Here is a 243-residue protein sequence, read N- to C-terminus: MSKTHFGFQSVDEQDKAQKVAGVFHSVAANYDLMNDLMSGGLHRAWKMFTIAQANVRPGYKVLDIAGGTGDLSKAFAKQAGDTGEVWHTDINESMLRVGRDRLLDKGVITPALLCDAEKIPFPDNYFDVVTVAFGLRNMTHKDVALAEMRRVLKPAGRLLVLEFSKVWDPLKKVYDVYSFKVLPWLGERFAKDAESYQYLAESIRMHPDQETLKTMMEQAGLDGVKYYNLSAGVVALHVGTKY.

Residues Thr-69, Asp-90, and 116 to 117 each bind S-adenosyl-L-methionine; that span reads DA.

This sequence belongs to the class I-like SAM-binding methyltransferase superfamily. MenG/UbiE family.

It catalyses the reaction a 2-demethylmenaquinol + S-adenosyl-L-methionine = a menaquinol + S-adenosyl-L-homocysteine + H(+). The catalysed reaction is a 2-methoxy-6-(all-trans-polyprenyl)benzene-1,4-diol + S-adenosyl-L-methionine = a 5-methoxy-2-methyl-3-(all-trans-polyprenyl)benzene-1,4-diol + S-adenosyl-L-homocysteine + H(+). It participates in quinol/quinone metabolism; menaquinone biosynthesis; menaquinol from 1,4-dihydroxy-2-naphthoate: step 2/2. It functions in the pathway cofactor biosynthesis; ubiquinone biosynthesis. Functionally, methyltransferase required for the conversion of demethylmenaquinol (DMKH2) to menaquinol (MKH2) and the conversion of 2-polyprenyl-6-methoxy-1,4-benzoquinol (DDMQH2) to 2-polyprenyl-3-methyl-6-methoxy-1,4-benzoquinol (DMQH2). The chain is Ubiquinone/menaquinone biosynthesis C-methyltransferase UbiE from Paraburkholderia phytofirmans (strain DSM 17436 / LMG 22146 / PsJN) (Burkholderia phytofirmans).